Reading from the N-terminus, the 409-residue chain is Failed axon connections homolog (409 aa).

The chain crosses the membrane as a helical span at residues Tyr68 to Ile88. Residues Asp372–Phe393 form a disordered region.

It belongs to the FAX family.

Its subcellular location is the membrane. Its function is as follows. May play a role in axonal development. This Mus musculus (Mouse) protein is Failed axon connections homolog (Faxc).